The following is a 180-amino-acid chain: ATP synthase subunit b (180 aa).

The helical transmembrane segment at 26-48 threads the bilayer; that stretch reads SMILFWKAVNTVILLGLVYYFGG.

This sequence belongs to the ATPase B chain family. As to quaternary structure, F-type ATPases have 2 components, F(1) - the catalytic core - and F(0) - the membrane proton channel. F(1) has five subunits: alpha(3), beta(3), gamma(1), delta(1), epsilon(1). F(0) has three main subunits: a(1), b(2) and c(10-14). The alpha and beta chains form an alternating ring which encloses part of the gamma chain. F(1) is attached to F(0) by a central stalk formed by the gamma and epsilon chains, while a peripheral stalk is formed by the delta and b chains.

The protein resides in the cell inner membrane. Functionally, f(1)F(0) ATP synthase produces ATP from ADP in the presence of a proton or sodium gradient. F-type ATPases consist of two structural domains, F(1) containing the extramembraneous catalytic core and F(0) containing the membrane proton channel, linked together by a central stalk and a peripheral stalk. During catalysis, ATP synthesis in the catalytic domain of F(1) is coupled via a rotary mechanism of the central stalk subunits to proton translocation. In terms of biological role, component of the F(0) channel, it forms part of the peripheral stalk, linking F(1) to F(0). This chain is ATP synthase subunit b, found in Sulfurihydrogenibium sp. (strain YO3AOP1).